A 233-amino-acid chain; its full sequence is Antiholin-like protein LrgB (233 aa).

The next 7 helical transmembrane spans lie at threonine 9–glutamate 29, phenylalanine 34–threonine 54, isoleucine 63–leucine 83, isoleucine 97–lysine 117, phenylalanine 121–proline 141, alanine 144–isoleucine 164, and isoleucine 212–phenylalanine 232.

The protein belongs to the CidB/LrgB family. LrgB subfamily.

The protein localises to the cell membrane. Its function is as follows. Inhibits the expression or activity of extracellular murein hydrolases by interacting, possibly with LrgA, with the holin-like proteins CidA and/or CidB. The LrgAB and CidAB proteins may affect the proton motive force of the membrane. May be involved in programmed cell death (PCD), possibly triggering PCD in response to antibiotics and environmental stresses. The sequence is that of Antiholin-like protein LrgB from Staphylococcus aureus (strain Mu3 / ATCC 700698).